The sequence spans 346 residues: Phosphoribosylformylglycinamidine cyclo-ligase (346 aa).

The protein belongs to the AIR synthase family.

It is found in the cytoplasm. The enzyme catalyses 2-formamido-N(1)-(5-O-phospho-beta-D-ribosyl)acetamidine + ATP = 5-amino-1-(5-phospho-beta-D-ribosyl)imidazole + ADP + phosphate + H(+). The protein operates within purine metabolism; IMP biosynthesis via de novo pathway; 5-amino-1-(5-phospho-D-ribosyl)imidazole from N(2)-formyl-N(1)-(5-phospho-D-ribosyl)glycinamide: step 2/2. This is Phosphoribosylformylglycinamidine cyclo-ligase from Vibrio vulnificus (strain YJ016).